A 162-amino-acid chain; its full sequence is Podoplanin (162 aa).

The N-terminal stretch at 1 to 22 is a signal peptide; the sequence is MWKVSALLFVLGSASLWVLAEG. The disordered stretch occupies residues 23–57; the sequence is ASTGQPEDDTETTGLEGGVAMPGAEDDVVTPGTSE. Residues 23–131 are Extracellular-facing; that stretch reads ASTGQPEDDT…EKDGLSTVTL (109 aa). Threonine 25, threonine 32, threonine 34, threonine 35, threonine 52, threonine 55, threonine 65, threonine 66, threonine 76, and threonine 85 each carry an O-linked (GalNAc...) threonine glycan. A compositionally biased stretch (polar residues) spans 85-108; that stretch reads TSESTVHAQEQSPSATASNVATSH. Residues 85–119 form a disordered region; sequence TSESTVHAQEQSPSATASNVATSHSTEKVDGDTQT. O-linked (GalNAc...) serine glycans are attached at residues serine 86 and serine 88. Threonine 89 is a glycosylation site (O-linked (GalNAc...) threonine). O-linked (GalNAc...) serine glycosylation is found at serine 96 and serine 98. Threonine 100 carries O-linked (GalNAc...) threonine glycosylation. Residue serine 102 is glycosylated (O-linked (GalNAc...) serine). Threonine 106 carries O-linked (GalNAc...) threonine glycosylation. 2 O-linked (GalNAc...) serine glycosylation sites follow: serine 107 and serine 109. A compositionally biased stretch (basic and acidic residues) spans 109 to 119; the sequence is STEKVDGDTQT. 4 O-linked (GalNAc...) threonine glycosylation sites follow: threonine 110, threonine 117, threonine 119, and threonine 120. The helical transmembrane segment at 132-152 threads the bilayer; that stretch reads VGIIVGVLLAIGFIGAIIVVV. The requires for dimerization and lipid rafts association stretch occupies residues 133-137; the sequence is GIIVG. The Cytoplasmic portion of the chain corresponds to 153–162; sequence MRKMSGRYSP. The tract at residues 154–155 is requires for interaction with MSN and EZR; the sequence is RK.

This sequence belongs to the podoplanin family. In terms of assembly, homodimer. Interacts with CLEC1B; the interaction is independent of CLEC1B glycosylation and activates CLEC1B; the interaction is dependent of sialic acid on O-glycans. Interacts with CD9; this interaction is homophilic and attenuates platelet aggregation and pulmonary metastasis induced by PDPN. Interacts with LGALS8; the interaction is glycosylation-dependent; may participate in connection of the lymphatic endothelium to the surrounding extracellular matrix. Interacts with HSPA9. Interacts (via extracellular domain) with CD44; this interaction is required for PDPN-mediated directional migration and regulation of lamellipodia extension/stabilization during cell spreading and migration. Interacts (via cytoplasmic domain) with MSN and EZR; activates RHOA and promotes epithelial-mesenchymal transition. Interacts with CCL21; relocalized PDPN to the basolateral membrane. In terms of processing, extensively O-glycosylated. Contains sialic acid residues. O-glycosylation is necessary for platelet aggregation activity. Disialylated at Thr-52; sialic acid is critical for platelet-aggregating activity and for CLEC1B interaction. Post-translationally, the N-terminus is blocked. Cleaved by a metalloprotease within its extracellular (EC) domain, generating a membrane-bound C-terminal fragment (PCTF33) and an extracellular fragment. The resulting membrane-bound C-terminal fragment (PCTF33) is further processed between Val-150 and Val-151 by PSEN1/gamma-secretase generating the intracellular domain of podoplanin (PICD). In terms of tissue distribution, highly expressed in placenta, lung, skeletal muscle and brain. Weakly expressed in brain, kidney and liver. In placenta, expressed on the apical plasma membrane of endothelium. In lung, expressed in alveolar epithelium. Up-regulated in colorectal tumors and expressed in 25% of early oral squamous cell carcinomas.

It localises to the membrane. It is found in the cell projection. The protein localises to the lamellipodium membrane. The protein resides in the filopodium membrane. Its subcellular location is the microvillus membrane. It localises to the ruffle membrane. It is found in the membrane raft. The protein localises to the apical cell membrane. The protein resides in the basolateral cell membrane. Its subcellular location is the invadopodium. It localises to the cytoplasm. It is found in the cytosol. Functionally, mediates effects on cell migration and adhesion through its different partners. During development plays a role in blood and lymphatic vessels separation by binding CLEC1B, triggering CLEC1B activation in platelets and leading to platelet activation and/or aggregation. Interaction with CD9, on the contrary, attenuates platelet aggregation induced by PDPN. Through MSN or EZR interaction promotes epithelial-mesenchymal transition (EMT) leading to ERZ phosphorylation and triggering RHOA activation leading to cell migration increase and invasiveness. Interaction with CD44 promotes directional cell migration in epithelial and tumor cells. In lymph nodes (LNs), controls fibroblastic reticular cells (FRCs) adhesion to the extracellular matrix (ECM) and contraction of the actomyosin by maintaining ERM proteins (EZR; MSN and RDX) and MYL9 activation through association with unknown transmembrane proteins. Engagement of CLEC1B by PDPN promotes FRCs relaxation by blocking lateral membrane interactions leading to reduction of ERM proteins (EZR; MSN and RDX) and MYL9 activation. Through binding with LGALS8 may participate in connection of the lymphatic endothelium to the surrounding extracellular matrix. In keratinocytes, induces changes in cell morphology showing an elongated shape, numerous membrane protrusions, major reorganization of the actin cytoskeleton, increased motility and decreased cell adhesion. Controls invadopodia stability and maturation leading to efficient degradation of the extracellular matrix (ECM) in tumor cells through modulation of RHOC activity in order to activate ROCK1/ROCK2 and LIMK1/LIMK2 and inactivation of CFL1. Required for normal lung cell proliferation and alveolus formation at birth. Does not function as a water channel or as a regulator of aquaporin-type water channels. Does not have any effect on folic acid or amino acid transport. In Homo sapiens (Human), this protein is Podoplanin.